Here is a 138-residue protein sequence, read N- to C-terminus: MGLRSCTHFATLVMPLWALAFCFLVLVPVPAQTTSLQISKGDRRLQDLESNMGAESDQPNANLVGTSLSRFGDKRNQKIITFGRRVPRPIIPIELDLLMDNDDENTKAKRFDDYGHMRFGKRGGDDQFDDYGHMRFGR.

A signal peptide spans 1 to 33 (MGLRSCTHFATLVMPLWALAFCFLVLVPVPAQT). A propeptide spanning residues 34 to 73 (TSLQISKGDRRLQDLESNMGAESDQPNANLVGTSLSRFGD) is cleaved from the precursor. Phenylalanine 82 carries the phenylalanine amide modification. The propeptide occupies 86–108 (VPRPIIPIELDLLMDNDDENTKA). At tyrosine 114 the chain carries Sulfotyrosine. Phenylalanine amide is present on phenylalanine 119. Tyrosine 131 carries the sulfotyrosine modification. Phenylalanine 136 carries the post-translational modification Phenylalanine amide.

Belongs to the gastrin/cholecystokinin family.

The protein localises to the secreted. Its function is as follows. Drosulfakinin-0 (DSK 0) plays diverse biological roles including regulating gut muscle contraction in adults but not in larvae. The chain is Drosulfakinins from Drosophila teissieri (Fruit fly).